A 178-amino-acid chain; its full sequence is Aspartic proteinase nepenthesin-2 (178 aa).

Residue Asp-98 is part of the active site.

This sequence belongs to the peptidase A1 family.

The protein localises to the secreted. The enzyme catalyses Similar to pepsin, but also cleaves on either side of Asp and at Lys-|-Arg.. Its activity is regulated as follows. Inhibited by pepstatin and by diazoacetyl-D,L-norleucine methyl ester (DAN) in the presence of Cu(2+) ions. In terms of biological role, extracellular proteinase found in the pitcher fluid of carnivorous plants. Digest prey for nitrogen uptake. This Nepenthes distillatoria (Pitcher plant) protein is Aspartic proteinase nepenthesin-2.